The following is a 149-amino-acid chain: D-aminoacyl-tRNA deacylase (149 aa).

The Gly-cisPro motif, important for rejection of L-amino acids motif lies at 137–138; it reads GP.

The protein belongs to the DTD family. In terms of assembly, homodimer.

The protein localises to the cytoplasm. The enzyme catalyses glycyl-tRNA(Ala) + H2O = tRNA(Ala) + glycine + H(+). It catalyses the reaction a D-aminoacyl-tRNA + H2O = a tRNA + a D-alpha-amino acid + H(+). Functionally, an aminoacyl-tRNA editing enzyme that deacylates mischarged D-aminoacyl-tRNAs. Also deacylates mischarged glycyl-tRNA(Ala), protecting cells against glycine mischarging by AlaRS. Acts via tRNA-based rather than protein-based catalysis; rejects L-amino acids rather than detecting D-amino acids in the active site. By recycling D-aminoacyl-tRNA to D-amino acids and free tRNA molecules, this enzyme counteracts the toxicity associated with the formation of D-aminoacyl-tRNA entities in vivo and helps enforce protein L-homochirality. This Clostridium botulinum (strain Eklund 17B / Type B) protein is D-aminoacyl-tRNA deacylase.